Consider the following 232-residue polypeptide: Rhamnogalacturonan acetylesterase RhgT (232 aa).

Ser-14 serves as the catalytic Nucleophile. Catalysis depends on residues Glu-191 and His-195.

This sequence belongs to the 'GDSL' lipolytic enzyme family. Monomer.

Its activity is regulated as follows. Almost completely inhibited by diethylpyrocarbonate at 5 mM and completely inhibited by phenylmethylsulfonyl fluoride (PMSF) at 50 mM. Dimethyl phosphite achieves only a 53% inhibition. Also inhibited by metal ions (magnesium, manganese and calcium) and chelating agent (EDTA) at the same level. Its function is as follows. May play a role in the degradation of type I rhamnogalacturonan derived from plant cell walls. This enzyme has a broad substrate specificity, and shows strong preference for glucose pentaacetate, beta-naphthylacetate, and p-nitrophenyl acetate (pNPA). Also active toward acetylated xylan. This chain is Rhamnogalacturonan acetylesterase RhgT (rhgT), found in Bacillus subtilis (strain 168).